Consider the following 146-residue polypeptide: Ankyrin repeat-containing protein P16F5.05c (146 aa).

ANK repeat units lie at residues 1-31 (MDVD…ELSR), 35-64 (NGNS…KEVI), 70-99 (SGNT…DPHI), and 103-132 (YEKS…AKGS).

The protein resides in the cytoplasm. Its subcellular location is the nucleus. The sequence is that of Ankyrin repeat-containing protein P16F5.05c from Schizosaccharomyces pombe (strain 972 / ATCC 24843) (Fission yeast).